Here is a 475-residue protein sequence, read N- to C-terminus: Ribulose bisphosphate carboxylase large chain (475 aa).

Residues 1 to 2 constitute a propeptide that is removed on maturation; it reads MS. N-acetylproline is present on Pro3. Lys14 is subject to N6,N6,N6-trimethyllysine. The substrate site is built by Asn123 and Thr173. Lys175 serves as the catalytic Proton acceptor. Lys177 lines the substrate pocket. 3 residues coordinate Mg(2+): Lys201, Asp203, and Glu204. Residue Lys201 is modified to N6-carboxylysine. Catalysis depends on His294, which acts as the Proton acceptor. Positions 295, 327, and 379 each coordinate substrate.

This sequence belongs to the RuBisCO large chain family. Type I subfamily. In terms of assembly, heterohexadecamer of 8 large chains and 8 small chains; disulfide-linked. The disulfide link is formed within the large subunit homodimers. Mg(2+) is required as a cofactor. The disulfide bond which can form in the large chain dimeric partners within the hexadecamer appears to be associated with oxidative stress and protein turnover.

The protein localises to the plastid. It localises to the chloroplast. The enzyme catalyses 2 (2R)-3-phosphoglycerate + 2 H(+) = D-ribulose 1,5-bisphosphate + CO2 + H2O. It carries out the reaction D-ribulose 1,5-bisphosphate + O2 = 2-phosphoglycolate + (2R)-3-phosphoglycerate + 2 H(+). Its function is as follows. RuBisCO catalyzes two reactions: the carboxylation of D-ribulose 1,5-bisphosphate, the primary event in carbon dioxide fixation, as well as the oxidative fragmentation of the pentose substrate in the photorespiration process. Both reactions occur simultaneously and in competition at the same active site. This Angiopteris evecta (Mule's foot fern) protein is Ribulose bisphosphate carboxylase large chain.